Here is a 276-residue protein sequence, read N- to C-terminus: 2,3,4,5-tetrahydropyridine-2,6-dicarboxylate N-succinyltransferase (276 aa).

Residues arginine 100 and aspartate 137 each coordinate substrate.

This sequence belongs to the transferase hexapeptide repeat family. In terms of assembly, homotrimer.

The protein localises to the cytoplasm. It catalyses the reaction (S)-2,3,4,5-tetrahydrodipicolinate + succinyl-CoA + H2O = (S)-2-succinylamino-6-oxoheptanedioate + CoA. Its pathway is amino-acid biosynthesis; L-lysine biosynthesis via DAP pathway; LL-2,6-diaminopimelate from (S)-tetrahydrodipicolinate (succinylase route): step 1/3. This Zymomonas mobilis subsp. mobilis (strain ATCC 31821 / ZM4 / CP4) protein is 2,3,4,5-tetrahydropyridine-2,6-dicarboxylate N-succinyltransferase.